The sequence spans 359 residues: Guanine nucleotide-binding protein G(o) subunit alpha (359 aa).

The segment at 1–26 is disordered; the sequence is MGGCVSATPEEREAKTRSSVIDRQQR. Residue Gly-2 is the site of N-myristoyl glycine attachment. A lipid anchor (S-palmitoyl cysteine) is attached at Cys-4. The G-alpha domain occupies 34 to 359; sequence NTIKILLLGA…RENLEAANLL (326 aa). The tract at residues 37-50 is G1 motif; it reads KILLLGAGESGKST. GTP is bound by residues 42-49, 178-184, 203-207, 272-275, and Ala-331; these read GAGESGKS, LRSRVQT, DVGGQ, and NKAD. 2 residues coordinate Mg(2+): Ser-49 and Thr-184. The segment at 176 to 184 is G2 motif; sequence DVLRSRVQT. Residues 199–208 form a G3 motif region; that stretch reads YRVVDVGGQR. Positions 268-275 are G4 motif; that stretch reads ILFLNKAD. The tract at residues 329–334 is G5 motif; sequence TTATDT.

The protein belongs to the G-alpha family. G(i/o/t/z) subfamily. In terms of assembly, g proteins are composed of 3 units; alpha, beta and gamma. The alpha chain contains the guanine nucleotide binding site.

Its function is as follows. Guanine nucleotide-binding proteins (G proteins) are involved as modulators or transducers in various transmembrane signaling systems. The G(o) protein function is not clear. The chain is Guanine nucleotide-binding protein G(o) subunit alpha from Geodia cydonium (Sponge).